The sequence spans 472 residues: Cell division protein FtsP (472 aa).

Positions 1-27 (MSLSRRQFIQASGIALCAGAMPLTARA) form a signal peptide, tat-type signal.

The protein belongs to the FtsP family. Predicted to be exported by the Tat system. The position of the signal peptide cleavage has not been experimentally proven.

The protein localises to the periplasm. Its function is as follows. Cell division protein that is required for growth during stress conditions. May be involved in protecting or stabilizing the divisomal assembly under conditions of stress. The protein is Cell division protein FtsP of Dickeya dadantii (strain 3937) (Erwinia chrysanthemi (strain 3937)).